The primary structure comprises 159 residues: U1 small nuclear ribonucleoprotein C (159 aa).

The segment at 4–36 adopts a Matrin-type zinc-finger fold; that stretch reads FYCDYCDTYLTHDSPSVRKTHCSGRKHKENVKD. The disordered stretch occupies residues 61-99; that stretch reads KIPPTPFPGAPPPGGSLLPHPSIGGPPRPGMLPAPPMGG. 2 stretches are compositionally biased toward pro residues: residues 63–74 and 84–99; these read PPTPFPGAPPPG and GGPP…PMGG.

It belongs to the U1 small nuclear ribonucleoprotein C family. In terms of assembly, component of the U1 snRNP. The U1 snRNP is composed of the U1 snRNA and the 7 core Sm proteins snrpb, snrpd1, snrpd2, snrpd3, snrpe, snrpf and snrpg that assemble in a heptameric protein ring on the Sm site of the small nuclear RNA to form the core snRNP, and at least 3 U1 snRNP-specific proteins snrnp70/U1-70K, snrpa/U1-A and snrpc/U1-C. snrpc/U1-C interacts with U1 snRNA and the 5' splice-site region of the pre-mRNA.

The protein resides in the nucleus. Component of the spliceosomal U1 snRNP, which is essential for recognition of the pre-mRNA 5' splice-site and the subsequent assembly of the spliceosome. snrpc/U1-C is directly involved in initial 5' splice-site recognition for both constitutive and regulated alternative splicing. The interaction with the 5' splice-site seems to precede base-pairing between the pre-mRNA and the U1 snRNA. Stimulates commitment or early (E) complex formation by stabilizing the base pairing of the 5' end of the U1 snRNA and the 5' splice-site region. In Danio rerio (Zebrafish), this protein is U1 small nuclear ribonucleoprotein C.